Reading from the N-terminus, the 853-residue chain is DNA mismatch repair protein MutS (853 aa).

614–621 (GPNMGGKS) contacts ATP.

This sequence belongs to the DNA mismatch repair MutS family.

In terms of biological role, this protein is involved in the repair of mismatches in DNA. It is possible that it carries out the mismatch recognition step. This protein has a weak ATPase activity. In Cronobacter sakazakii (strain ATCC BAA-894) (Enterobacter sakazakii), this protein is DNA mismatch repair protein MutS.